The sequence spans 271 residues: Zinc-finger homeodomain protein 8 (271 aa).

Residue S16 is modified to Phosphoserine. Residues 56–107 form a ZF-HD dimerization-type; degenerate zinc finger; it reads YKECLKNHAAGIGGHALDGCGEFMPSPSFNSNDPASLTCAACGCHRNFHRRE. A disordered region spans residues 125 to 154; it reads HNRHQLPPPPPPHLAGIRSPDDDDSASPPP. The segment at residues 179–242 is a DNA-binding region (homeobox); sequence RKRFRTKFSQ…NNKISGRSGA (64 aa).

Homo- and heterodimer with other ZFHD proteins. Interacts with MIF1, MIF2 and MIF3; these interactions prevent nuclear localization and DNA-binding to inhibit transcription regulation activity. Binds to ZHD1, ZHD2, ZHD4, ZHD10 and ZHD11. Interacts with HIPP30. As to expression, mostly expressed in flowers and inflorescence.

The protein localises to the nucleus. In terms of biological role, putative transcription factor. The sequence is that of Zinc-finger homeodomain protein 8 (ZHD8) from Arabidopsis thaliana (Mouse-ear cress).